Reading from the N-terminus, the 911-residue chain is DNA ligase 4 (911 aa).

The ATP site is built by glutamate 271, threonine 272, lysine 273, leucine 274, arginine 278, glutamate 331, lysine 345, phenylalanine 367, glutamate 427, lysine 432, lysine 449, and lysine 451. The active-site N6-AMP-lysine intermediate is the lysine 273. A Mg(2+)-binding site is contributed by glutamate 331. Glutamate 427 is a binding site for Mg(2+). Residues 610-620 are required for catalytic activity; sequence LASKHLYIGGD. BRCT domains follow at residues 654–743 and 808–911; these read KISN…PRFM and SPLS…QYLI.

It belongs to the ATP-dependent DNA ligase family. In terms of assembly, interacts with XRCC4; the LIG4-XRCC4 subcomplex has a 1:2 stoichiometry and XRCC4 is required for LIG4 stability. Component of the core long-range non-homologous end joining (NHEJ) complex (also named DNA-PK complex) composed of PRKDC, LIG4, XRCC4, XRCC6/Ku70, XRCC5/Ku86 and NHEJ1/XLF. Additional component of the NHEJ complex includes PAXX. Following autophosphorylation, PRKDC dissociates from DNA, leading to formation of the short-range NHEJ complex, composed of LIG4, XRCC4, XRCC6/Ku70, XRCC5/Ku86 and NHEJ1/XLF. Interacts with DCLRE1C; the interaction is direct. Interacts with APLF. Mg(2+) is required as a cofactor. In terms of tissue distribution, testis, thymus, prostate and heart.

The protein resides in the nucleus. It carries out the reaction ATP + (deoxyribonucleotide)n-3'-hydroxyl + 5'-phospho-(deoxyribonucleotide)m = (deoxyribonucleotide)n+m + AMP + diphosphate.. DNA ligase involved in DNA non-homologous end joining (NHEJ); required for double-strand break (DSB) repair and V(D)J recombination. Catalyzes the NHEJ ligation step of the broken DNA during DSB repair by resealing the DNA breaks after the gap filling is completed. Joins single-strand breaks in a double-stranded polydeoxynucleotide in an ATP-dependent reaction. LIG4 is mechanistically flexible: it can ligate nicks as well as compatible DNA overhangs alone, while in the presence of XRCC4, it can ligate ends with 2-nucleotides (nt) microhomology and 1-nt gaps. Forms a subcomplex with XRCC4; the LIG4-XRCC4 subcomplex is responsible for the NHEJ ligation step and XRCC4 enhances the joining activity of LIG4. Binding of the LIG4-XRCC4 complex to DNA ends is dependent on the assembly of the DNA-dependent protein kinase complex DNA-PK to these DNA ends. LIG4 regulates nuclear localization of XRCC4. The polypeptide is DNA ligase 4 (Homo sapiens (Human)).